The primary structure comprises 345 residues: MDLGPIYNTRDINDGKVINIDNPNYTNPVAIKKNENNNAYQFNHLKTLGLYIQNTTYFTDNFIITGGLRYEYFDQVVGRSTLKNIRSGYLAQKDGKLLYQLGSVYKFTPNIATFFNHAESFRPQNNRTLIINGELPAEQGKSFETGLKYENAYLNATVALFNINKRNVAETVNVNGTNELQIVGKQRSRGIEFDLNGQLTDNLSIAANYTYTKVKNLENHNNKLAVGKQLSGVPKHQASLFLAYNIGEFDFGNIRVGGGARYLGSWYAYNNTYTKAYKLPQAIVYDTFIAYDTKISGKKVSFQLNGKNLSNKVYSPSTSGNASRTLIPVALGYAREVILNTKIEF.

Met1 is a domain (TBDR plug). The TBDR beta-barrel domain maps to 1–345 (MDLGPIYNTR…EVILNTKIEF (345 aa)). A TonB C-terminal box motif is present at residues 328–345 (PVALGYAREVILNTKIEF).

Belongs to the TonB-dependent receptor family.

It is found in the cell outer membrane. This is an uncharacterized protein from Haemophilus influenzae (strain ATCC 51907 / DSM 11121 / KW20 / Rd).